The chain runs to 136 residues: MARTKQTARKNVGGKAPRKHIGQKSARKTASTTAGMKKPHRYRPGTVALREIRRYQKSTELLIRKLPFQRLVREIAQEFKGDLRFQSSAVLALQEAAEAYLVSLFEDTNLCAIHAKRVTIMPKDMQLARRIRGERS.

Residues 1 to 43 (MARTKQTARKNVGGKAPRKHIGQKSARKTASTTAGMKKPHRYR) are disordered. Lys-10 carries the post-translational modification N6-methylated lysine. N6-acetyllysine is present on residues Lys-15 and Lys-24. Basic residues predominate over residues 16–27 (APRKHIGQKSAR). N6-methylated lysine occurs at positions 28 and 37.

It belongs to the histone H3 family. The nucleosome is a histone octamer containing two molecules each of H2A, H2B, H3 and H4 assembled in one H3-H4 heterotetramer and two H2A-H2B heterodimers. The octamer wraps approximately 147 bp of DNA.

The protein localises to the nucleus. It localises to the chromosome. Core component of nucleosome. Nucleosomes wrap and compact DNA into chromatin, limiting DNA accessibility to the cellular machineries which require DNA as a template. Histones thereby play a central role in transcription regulation, DNA repair, DNA replication and chromosomal stability. DNA accessibility is regulated via a complex set of post-translational modifications of histones, also called histone code, and nucleosome remodeling. This chain is Histone H3, found in Euplotes crassus.